The chain runs to 495 residues: Probable cytochrome P450 508C1 (495 aa).

A helical transmembrane segment spans residues 3 to 21 (LLNSLLLLFLIYLIHSFYI). Residue Cys-442 coordinates heme.

This sequence belongs to the cytochrome P450 family. It depends on heme as a cofactor.

Its subcellular location is the membrane. The chain is Probable cytochrome P450 508C1 (cyp508C1) from Dictyostelium discoideum (Social amoeba).